We begin with the raw amino-acid sequence, 828 residues long: Putative alpha-1,3-mannosyltransferase MNN12 (828 aa).

The Cytoplasmic portion of the chain corresponds to 1 to 13 (MIEKLTIKRSRQK). Residues 14-34 (VIAYSVIIIWLMIVNIWLLNN) form a helical membrane-spanning segment. The Lumenal portion of the chain corresponds to 35 to 828 (YHLNSSTLTR…YYGDVWVGME (794 aa)). Asn-38 carries N-linked (GlcNAc...) asparagine glycosylation. The tract at residues 80–104 (HQEEDVPNSQSTDNSLIKPTSPAKN) is disordered. Positions 86 to 103 (PNSQSTDNSLIKPTSPAK) are enriched in polar residues. N-linked (GlcNAc...) asparagine glycosylation is found at Asn-247, Asn-437, and Asn-591.

It belongs to the MNN1/MNT family.

It localises to the golgi apparatus membrane. The protein operates within protein modification; protein glycosylation. Functionally, responsible for addition of the terminal mannose residues to the outer chain of core N-linked polysaccharides and to O-linked mannotriose. Implicated in late Golgi modifications. This is Putative alpha-1,3-mannosyltransferase MNN12 (MNN12) from Candida albicans (strain SC5314 / ATCC MYA-2876) (Yeast).